A 109-amino-acid chain; its full sequence is ATP-dependent Clp protease adapter protein ClpS (109 aa).

The segment at 1 to 23 (MTERKHDDTGVEEGTGLATKTRP) is disordered.

It belongs to the ClpS family. As to quaternary structure, binds to the N-terminal domain of the chaperone ClpA.

In terms of biological role, involved in the modulation of the specificity of the ClpAP-mediated ATP-dependent protein degradation. This is ATP-dependent Clp protease adapter protein ClpS from Maricaulis maris (strain MCS10) (Caulobacter maris).